We begin with the raw amino-acid sequence, 247 residues long: NAD(P)H-quinone oxidoreductase subunit K (247 aa).

Positions 63, 64, 128, and 159 each coordinate [4Fe-4S] cluster.

It belongs to the complex I 20 kDa subunit family. In terms of assembly, NDH-1 can be composed of about 15 different subunits; different subcomplexes with different compositions have been identified which probably have different functions. Requires [4Fe-4S] cluster as cofactor.

The protein localises to the cellular thylakoid membrane. The catalysed reaction is a plastoquinone + NADH + (n+1) H(+)(in) = a plastoquinol + NAD(+) + n H(+)(out). It catalyses the reaction a plastoquinone + NADPH + (n+1) H(+)(in) = a plastoquinol + NADP(+) + n H(+)(out). In terms of biological role, NDH-1 shuttles electrons from an unknown electron donor, via FMN and iron-sulfur (Fe-S) centers, to quinones in the respiratory and/or the photosynthetic chain. The immediate electron acceptor for the enzyme in this species is believed to be plastoquinone. Couples the redox reaction to proton translocation, and thus conserves the redox energy in a proton gradient. Cyanobacterial NDH-1 also plays a role in inorganic carbon-concentration. This chain is NAD(P)H-quinone oxidoreductase subunit K, found in Gloeothece citriformis (strain PCC 7424) (Cyanothece sp. (strain PCC 7424)).